The following is a 414-amino-acid chain: MAAAAVAGVAGLTTAHAKRLLREEDMTTVEFQTSEEVDVTPTFDTMGLREDLLRGIYAYGFEKPSAIQQKAIKQIIKGRDVIAQSQSGTGKTATFCVSVLQCLDIQIRETQALILAPTKELARQIQKVLLALGDYMNVQCHACIGGTNVGEDIRKLDYGQHVVAGTPGRVFDMIRRRSLRTRAIKMLVLDEADEMLNKGFKEQIYDVYRYLPPATQVCLISATLPHEILEMTNKFMTDPIRILVKRDELTLEGIKQFFVAVEREEWKFDTLCDLYDTLTITQAVIFCNTKRKVDWLTEKMREANFTVSSMHGDMPQKERESIMKEFRSGASRVLISTDVWARGLDVPQVSLIINYDLPNNRELYIHRIGRSGRYGRKGVAINFVKNDDIRILRDIEQYYSTQIDEMPMNVADLI.

Positions 41 to 69 (PTFDTMGLREDLLRGIYAYGFEKPSAIQQ) match the Q motif motif. ATP-binding positions include Lys-63, Gln-68, 85–92 (SQSGTGKT), and 88–93 (GTGKTA). A Helicase ATP-binding domain is found at 72–242 (IKQIIKGRDV…NKFMTDPIRI (171 aa)). The DEAD box signature appears at 190 to 193 (DEAD). The region spanning 253 to 414 (GIKQFFVAVE…EMPMNVADLI (162 aa)) is the Helicase C-terminal domain. ATP-binding positions include Asp-345 and 370–374 (RSGRY).

It belongs to the DEAD box helicase family. As to quaternary structure, identified in the spliceosome C complex. Part of the mRNA splicing-dependent exon junction complex (EJC) complex; the core complex contains casc3, eif4a3, magoh and rbm8a.

Its subcellular location is the nucleus. It localises to the nucleus speckle. It is found in the cytoplasm. The enzyme catalyses ATP + H2O = ADP + phosphate + H(+). Functionally, ATP-dependent RNA helicase. Involved in pre-mRNA splicing as component of the spliceosome. Core component of the splicing-dependent multiprotein exon junction complex (EJC) deposited at splice junctions on mRNAs. The EJC is a dynamic structure consisting of core proteins and several peripheral nuclear and cytoplasmic associated factors that join the complex only transiently either during EJC assembly or during subsequent mRNA metabolism. The EJC marks the position of the exon-exon junction in the mature mRNA for the gene expression machinery and the core components remain bound to spliced mRNAs throughout all stages of mRNA metabolism thereby influencing downstream processes including nuclear mRNA export, subcellular mRNA localization, translation efficiency and nonsense-mediated mRNA decay (NMD). Binds spliced mRNA in sequence-independent manner, 20-24 nucleotides upstream of mRNA exon-exon junctions. Involved in craniofacial development. When overexpressed, induces epidermis in dissociated cells that would otherwise adopt a neural fate, a process that requires an active BMP signaling pathway. The sequence is that of Eukaryotic initiation factor 4A-III-B (eif4a3-b) from Xenopus laevis (African clawed frog).